The primary structure comprises 131 residues: Small ribosomal subunit protein uS11 (131 aa).

Belongs to the universal ribosomal protein uS11 family. In terms of assembly, part of the 30S ribosomal subunit. Interacts with proteins S7 and S18. Binds to IF-3.

Its function is as follows. Located on the platform of the 30S subunit, it bridges several disparate RNA helices of the 16S rRNA. Forms part of the Shine-Dalgarno cleft in the 70S ribosome. The sequence is that of Small ribosomal subunit protein uS11 from Helicobacter pylori (strain ATCC 700392 / 26695) (Campylobacter pylori).